A 465-amino-acid chain; its full sequence is Cruciferin CRU4 (465 aa).

Residues M1–A22 form the signal peptide. 2 cysteine pairs are disulfide-bonded: C29–C62 and C105–C283. Cupin type-1 domains are found at residues L34–Q236 and E289–R438. At T108 the chain carries Phosphothreonine. A disordered region spans residues S112–F135. Gly residues predominate over residues Q117–Q133. Y306 carries the post-translational modification Phosphotyrosine. Phosphoserine is present on residues S308 and S443.

The protein belongs to the 11S seed storage protein (globulins) family. As to quaternary structure, heterohexamer; each subunit is composed of an acidic and a basic chain derived from a single precursor and linked by a disulfide bond.

Its subcellular location is the rough endoplasmic reticulum. This is a seed storage protein. In Brassica napus (Rape), this protein is Cruciferin CRU4 (CRU4).